The chain runs to 141 residues: Large ribosomal subunit protein uL23A (141 aa).

Phosphoserine is present on residues Ser-68 and Ser-70.

This sequence belongs to the universal ribosomal protein uL23 family. In terms of assembly, component of the large ribosomal subunit (LSU). Mature yeast ribosomes consist of a small (40S) and a large (60S) subunit. The 40S small subunit contains 1 molecule of ribosomal RNA (18S rRNA) and at least 33 different proteins. The large 60S subunit contains 3 rRNA molecules (25S, 5.8S and 5S rRNA) and at least 46 different proteins. uL23 is associated with the polypeptide exit tunnel.

The protein localises to the cytoplasm. Functionally, this protein binds to a specific region on the 26S rRNA. Its function is as follows. Component of the ribosome, a large ribonucleoprotein complex responsible for the synthesis of proteins in the cell. The small ribosomal subunit (SSU) binds messenger RNAs (mRNAs) and translates the encoded message by selecting cognate aminoacyl-transfer RNA (tRNA) molecules. The large subunit (LSU) contains the ribosomal catalytic site termed the peptidyl transferase center (PTC), which catalyzes the formation of peptide bonds, thereby polymerizing the amino acids delivered by tRNAs into a polypeptide chain. The nascent polypeptides leave the ribosome through a tunnel in the LSU and interact with protein factors that function in enzymatic processing, targeting, and the membrane insertion of nascent chains at the exit of the ribosomal tunnel. uL23 is a major component of the universal docking site for these factors at the polypeptide exit tunnel. This Schizosaccharomyces pombe (strain 972 / ATCC 24843) (Fission yeast) protein is Large ribosomal subunit protein uL23A (rpl2501).